Here is a 141-residue protein sequence, read N- to C-terminus: Large ribosomal subunit protein uL11 (141 aa).

The protein belongs to the universal ribosomal protein uL11 family. Part of the ribosomal stalk of the 50S ribosomal subunit. Interacts with L10 and the large rRNA to form the base of the stalk. L10 forms an elongated spine to which L12 dimers bind in a sequential fashion forming a multimeric L10(L12)X complex. Post-translationally, one or more lysine residues are methylated.

Its function is as follows. Forms part of the ribosomal stalk which helps the ribosome interact with GTP-bound translation factors. The polypeptide is Large ribosomal subunit protein uL11 (Streptococcus agalactiae serotype Ia (strain ATCC 27591 / A909 / CDC SS700)).